We begin with the raw amino-acid sequence, 143 residues long: 1,4-dihydroxy-2-naphthoyl-CoA hydrolase (143 aa).

Aspartate 14 is an active-site residue.

The protein belongs to the 4-hydroxybenzoyl-CoA thioesterase family. DHNA-CoA hydrolase subfamily.

It catalyses the reaction 1,4-dihydroxy-2-naphthoyl-CoA + H2O = 1,4-dihydroxy-2-naphthoate + CoA + H(+). It participates in cofactor biosynthesis; phylloquinone biosynthesis. It functions in the pathway quinol/quinone metabolism; 1,4-dihydroxy-2-naphthoate biosynthesis; 1,4-dihydroxy-2-naphthoate from chorismate: step 7/7. Its function is as follows. Catalyzes the hydrolysis of 1,4-dihydroxy-2-naphthoyl-CoA (DHNA-CoA) to 1,4-dihydroxy-2-naphthoate (DHNA), a reaction involved in phylloquinone (vitamin K1) biosynthesis. This Gloeothece citriformis (strain PCC 7424) (Cyanothece sp. (strain PCC 7424)) protein is 1,4-dihydroxy-2-naphthoyl-CoA hydrolase.